Consider the following 153-residue polypeptide: MADTLMSDIPFWQSKTLDDMTDAEWESLCDGCGQCCLHKLMDEDTDEIYFTNVACRQLNIKTCQCRNYERRFEYEPDCIKLTRDNLPTFEWLPMTCAYRLLAEGKGLPGWHPLLTGSKAAMHGERISVRHIAVKESEVRDWQDHILNKPSWAD.

It belongs to the UPF0260 family.

The polypeptide is UPF0260 protein CKO_01185 (Citrobacter koseri (strain ATCC BAA-895 / CDC 4225-83 / SGSC4696)).